The sequence spans 653 residues: Sodium-dependent phosphate transporter 2 (653 aa).

Residues 1 to 5 (MVLDE) are Extracellular-facing. The chain crosses the membrane as a helical span at residues 6 to 26 (YMWMVIVGFIIAFVLAFSVGA). Topologically, residues 27-46 (NDVANSFGTAVGSGVVTLRQ) are cytoplasmic. Residues 47 to 67 (ACILASIFETIGSVLLGAKVG) form a helical membrane-spanning segment. Residues 68 to 86 (ETIRKGIIDVNLYNNTVDL) lie on the Extracellular side of the membrane. N-linked (GlcNAc...) asparagine glycosylation is present at N81. A helical transmembrane segment spans residues 87–107 (LMAGEVSAMVGSAVWQLIASF). The Cytoplasmic segment spans residues 108–109 (LK). The helical transmembrane segment at 110-130 (LPVSGTHCIVGATIGFSLVAV) threads the bilayer. The Extracellular portion of the chain corresponds to 131 to 142 (GAHSVQWMQLVK). Residues 143–163 (IVASWFISPLLSGLMSGALFL) traverse the membrane as a helical segment. Residues 164 to 187 (MIKFFILNKEDPVPNGLKALPVFY) lie on the Cytoplasmic side of the membrane. Residues 188 to 208 (AATIGINVFSILFTGAPLLGL) traverse the membrane as a helical segment. Over 209 to 217 (QTFPVWATA) the chain is Extracellular. Residues 218–238 (LLSVGIAIVFALVVWFFVCPW) traverse the membrane as a helical segment. Over 239–483 (MKKKIASRLK…EDKEEKDKSQ (245 aa)) the chain is Cytoplasmic. Residues 275-310 (LPGAKGNDESVLPLTSSSPDAAVSSESVSNGNTRVP) are disordered. Positions 290-303 (SSSPDAAVSSESVS) are enriched in low complexity. The chain crosses the membrane as a helical span at residues 484 to 504 (VHLLFHFLQILTACFGSFAHG). Residues 505 to 532 (GNDVSNAIGPLVALWLIYQQGGVMQEAS) are Extracellular-facing. The chain crosses the membrane as a helical span at residues 533–553 (TPVWLLLYGGVGICAGLWVWG). The Cytoplasmic segment spans residues 554–572 (RRVIQTMGKDLTPITPSSG). The helical transmembrane segment at 573–587 (FTIELASAFTVVVAS) threads the bilayer. At 588-594 (NIGLPIS) the chain is on the extracellular side. A helical transmembrane segment spans residues 595 to 610 (TTHCKVGSVVAVGWIR). The Cytoplasmic portion of the chain corresponds to 611-622 (SRKAVDWRLFRN). The chain crosses the membrane as a helical span at residues 623 to 643 (IFLAWFVTVPVAGLFSAGVMA). At 644-653 (ILQYGILPYV) the chain is on the extracellular side.

It belongs to the inorganic phosphate transporter (PiT) (TC 2.A.20) family. As to quaternary structure, homodimer.

Its subcellular location is the cell membrane. The protein localises to the apical cell membrane. The catalysed reaction is 2 Na(+)(out) + phosphate(out) = 2 Na(+)(in) + phosphate(in). In terms of biological role, sodium-phosphate symporter which preferentially transports the monovalent form of phosphate with a stoichiometry of two sodium ions per phosphate ion. This is Sodium-dependent phosphate transporter 2 (slc20a2) from Xenopus laevis (African clawed frog).